The chain runs to 656 residues: Solute carrier family 5 member 4A (656 aa).

Residues 1–28 are Cytoplasmic-facing; sequence MASTASVSTSTASSELSSLSNNINNAAD. A helical membrane pass occupies residues 29–47; the sequence is ISVIVIYFVVVMAVGVWAM. Residues 48 to 64 lie on the Extracellular side of the membrane; it reads LKTNRSTVGGFFLAGRS. A helical membrane pass occupies residues 65–85; sequence MTWWPMGASLFASNIGSGHFV. Residues 86–105 lie on the Cytoplasmic side of the membrane; that stretch reads GLAGTGAASGIAVTAFESHS. Residues 106-126 form a helical membrane-spanning segment; sequence FALLLVLGWIFVPIYIKAGVM. The Extracellular portion of the chain corresponds to 127–171; sequence TMPEYLKKRFGGKRLQIYLSILFLFICVILTISADIFSGAIFIKL. Residues 172 to 191 form a helical membrane-spanning segment; sequence ALGLNLYLAILILLAITAIF. Residues 192-208 are Cytoplasmic-facing; sequence TITGGLASVIYTDTVQA. A helical membrane pass occupies residues 209-229; sequence VIMLVGSFILMVFAFVEVGGY. Residues 230 to 270 are Extracellular-facing; that stretch reads ESFTEKFMNAIPSVVEGDNLTINSRCYTPQPDSFHIFRDPV. An N-linked (GlcNAc...) asparagine glycan is attached at N248. A helical transmembrane segment spans residues 271 to 291; sequence TGDIPWPGTAFGMPITALWYW. Topologically, residues 292 to 314 are cytoplasmic; it reads CINQVIVQRCLCGKNLSHVKAAC. Residues 315 to 334 form a helical membrane-spanning segment; the sequence is ILCGYLKLLPLFFMVMPGMI. Residues 335–423 are Extracellular-facing; it reads SRILYTDMVA…RKKASERELL (89 aa). The helical transmembrane segment at 424-443 threads the bilayer; it reads IAGRLFVSVLIVTSILWVPI. Residues 444–455 lie on the Cytoplasmic side of the membrane; the sequence is VEVSQGGQLVHY. The helical transmembrane segment at 456 to 476 threads the bilayer; that stretch reads TEAISSYLGPPIAAVFLVAVF. The Extracellular segment spans residues 477–526; sequence CKRANEQGAFWGLMVGLVMGLIRMIAEFSYGTGSCLAPSSCPKIICGVHY. A helical membrane pass occupies residues 527 to 547; it reads LYFAIILFFVCILVILGVSYL. Residues 548 to 634 lie on the Cytoplasmic side of the membrane; that stretch reads TKPIPDVHLH…TDTTEKPFWR (87 aa). The tract at residues 574–593 is disordered; that stretch reads DAEDKEENGADDRTEEDQTE. Residues 635 to 655 form a helical membrane-spanning segment; the sequence is TVMNVNVILLLAVAAFFYGYF.

The protein belongs to the sodium:solute symporter (SSF) (TC 2.A.21) family. As to expression, expressed in small intestine. Expressed in kidney.

It localises to the cell membrane. With respect to regulation, not inhibited by phlorizin. Its function is as follows. Does not function as sodium/D-glucose symporter. Generates D-glucose-induced depolarization in a pH-dependent manner, with activity in acidic conditions (pH 5) but not neutral conditions. This chain is Solute carrier family 5 member 4A, found in Mus musculus (Mouse).